Here is a 176-residue protein sequence, read N- to C-terminus: Ferritin, middle subunit (176 aa).

The 150-residue stretch at 7 to 156 folds into the Ferritin-like diiron domain; sequence QNYHRDCEAA…DFITNLSRMD (150 aa). Positions 24, 59, 62, 104, and 138 each coordinate Fe cation.

It belongs to the ferritin family. As to quaternary structure, in liver, forms a heteromer consisting of middle and heavy subunits. In spleen, forms a homomer. The functional molecule forms a roughly spherical shell with a diameter of 12 nm and contains a central cavity into which the insoluble mineral iron core is deposited. Liver and spleen (at protein level).

It carries out the reaction 4 Fe(2+) + O2 + 4 H(+) = 4 Fe(3+) + 2 H2O. In terms of biological role, stores iron in a soluble, non-toxic, readily available form. Important for iron homeostasis. Has ferroxidase activity. Iron is taken up in the ferrous form and deposited as ferric hydroxides after oxidation. This chain is Ferritin, middle subunit, found in Trematomus newnesi (Dusky notothen).